Reading from the N-terminus, the 209-residue chain is T-cell surface glycoprotein CD8 beta chain (209 aa).

The N-terminal stretch at 1–21 (MRPRMWLLLSAQLAALHGNSV) is a signal peptide. The region spanning 22–131 (LQQTPAYIMV…TLIFGTGTQL (110 aa)) is the Ig-like V-type domain. Residues 22-169 (LQQTPAYIMV…ETRKGPLCSP (148 aa)) are Extracellular-facing. Cys-41 and Cys-115 form a disulfide bridge. An N-linked (GlcNAc...) asparagine glycan is attached at Asn-101. The chain crosses the membrane as a helical span at residues 170–190 (ITLSLLVAGILVLLVSLGVAI). Residues 191 to 209 (HLYCRQRRARLRFMKQFYK) are Cytoplasmic-facing.

As to quaternary structure, forms disulfide-linked heterodimers with CD8A at the cell surface. Interacts with CD3D; this interaction couples TCR-CD3 with CD8. Interacts with LCK. Post-translationally, phosphorylated as a consequence of T-cell activation. Palmitoylated at the cytoplasmic tail and thereby targets the heterodimer CD8A/CD8B to lipid rafts unlike CD8A homodimers.

It localises to the cell membrane. Its function is as follows. Integral membrane glycoprotein that plays an essential role in the immune response and serves multiple functions in responses against both external and internal offenses. In T-cells, functions primarily as a coreceptor for MHC class I molecule:peptide complex. The antigens presented by class I peptides are derived from cytosolic proteins while class II derived from extracellular proteins. Interacts simultaneously with the T-cell receptor (TCR) and the MHC class I proteins presented by antigen presenting cells (APCs). In turn, recruits the Src kinase LCK to the vicinity of the TCR-CD3 complex. A palmitoylation site in the cytoplasmic tail of CD8B chain contributes to partitioning of CD8 into the plasma membrane lipid rafts where signaling proteins are enriched. Once LCK recruited, it initiates different intracellular signaling pathways by phosphorylating various substrates ultimately leading to lymphokine production, motility, adhesion and activation of cytotoxic T-lymphocytes (CTLs). Additionally, plays a critical role in thymic selection of CD8+ T-cells. This Saimiri sciureus (Common squirrel monkey) protein is T-cell surface glycoprotein CD8 beta chain (CD8B).